Here is a 102-residue protein sequence, read N- to C-terminus: Large ribosomal subunit protein bL21 (102 aa).

Belongs to the bacterial ribosomal protein bL21 family. In terms of assembly, part of the 50S ribosomal subunit. Contacts protein L20.

Its function is as follows. This protein binds to 23S rRNA in the presence of protein L20. The protein is Large ribosomal subunit protein bL21 of Zymomonas mobilis subsp. mobilis (strain ATCC 31821 / ZM4 / CP4).